Here is a 699-residue protein sequence, read N- to C-terminus: MAYQKVECQFNGQTLTLETGKMARQADGAVVVSFGGTKVLCTAVSAKQMREGQSFFPLTVNYQEKFYAGGKIPGSFFRRERGATERETLVCRLIDRPLRPLFPKGYMFETQIMPTVISVDEQNDPDTLAMVGASAAIAVSDIPFDGPVAAVRVGRVEGNLIANPTIEQRAESDMDIIVSGSRDAIIMVEGETRFISEQEMLDALFFAHEAIQPLIDVQLELVKIAGKEKREFSVPEIDPAVVEKVAELAETRLSEAVKIRTKQDRYAAVAEIKTEILETLAADFEDQEDDISEAFGNLQKRLVRQMVARDKVRIDGRDKNTIRPITCEIGLLPRAHGSALFTRGETQALVAAALGTSKDEQRMDNVQSMEFKKFMLHYNFPPFCVGETSMRLFPGRREIGHGMLAERSIAQVLPNHDDFPYTLRVVSDILESNGSSSMASVCGASLALMDAGVPVSEAVAGIAMGLIKEGDDIVVLSDILGDEDHLGDMDFKVTGTREGITALQMDIKIKGVSKEIMQQALEQAREGRLHILDKMAEAITAPRSDLSPYAPRITTIQVKPDQVRTVIGPGGKNVRGIIEATGCAIDIEDDGRINIASADGDACKAAIKMIRNLTQEAVVGKLYMATVKKIMEFGAFVEIFPGTEGLVHISELAKERVKKVTDILQEGDQVLVKCLDIDRQGKIKLSRKEALGQSLPEEG.

2 residues coordinate Mg(2+): D484 and D490. One can recognise a KH domain in the interval P551–I610. The S1 motif domain occupies G620–K688.

Belongs to the polyribonucleotide nucleotidyltransferase family. Mg(2+) is required as a cofactor.

It is found in the cytoplasm. It catalyses the reaction RNA(n+1) + phosphate = RNA(n) + a ribonucleoside 5'-diphosphate. Its function is as follows. Involved in mRNA degradation. Catalyzes the phosphorolysis of single-stranded polyribonucleotides processively in the 3'- to 5'-direction. This Syntrophotalea carbinolica (strain DSM 2380 / NBRC 103641 / GraBd1) (Pelobacter carbinolicus) protein is Polyribonucleotide nucleotidyltransferase.